The primary structure comprises 636 residues: 3-phosphoinositide-dependent protein kinase 1 (636 aa).

Low complexity-rich tracts occupy residues 1–20 (MEDL…NNDT) and 27–37 (APTTLNLTPTA). Residues 1 to 45 (MEDLTPTNTSLDTTTTNNDTTSDREAAPTTLNLTPTASESENSLS) are disordered. The region spanning 69–364 (FMFLQSMGEG…SQELMAHKFF (296 aa)) is the Protein kinase domain. Residues 79-81 (AYS) and K98 contribute to the ATP site. Residues 100 to 149 (LQKSYLNRHQKMDAIIREKNILTYLSQECGGHPFVTQLYTHFHDQARIYF) form a PIF-pocket region. Residues 152–154 (GLV) and D158 contribute to the ATP site. The active-site Proton acceptor is D197. D201 and D215 together coordinate ATP. Disordered regions lie at residues 233–264 (TDAN…EENT) and 593–636 (KKSR…KKSP). The stretch at 550-631 (DLEKKADEWC…QVSKKLSMQM (82 aa)) forms a coiled coil. The span at 597–624 (KEMMREQKALRRKQEKEEKKALKAEQVS) shows a compositional bias: basic and acidic residues.

It belongs to the protein kinase superfamily. AGC Ser/Thr protein kinase family. PDPK1 subfamily. In terms of assembly, interacts directly with sgk-1, akt-1 and akt-2.

It is found in the cytoplasm. It carries out the reaction L-seryl-[protein] + ATP = O-phospho-L-seryl-[protein] + ADP + H(+). The catalysed reaction is L-threonyl-[protein] + ATP = O-phospho-L-threonyl-[protein] + ADP + H(+). Its function is as follows. Involved in the daf-2/insulin receptor-like transduction pathway, which controls longevity and prevents developmental arrest at the dauer stage. Phosphorylates and activates sgk-1, akt-1 and akt-2. The sequence is that of 3-phosphoinositide-dependent protein kinase 1 from Caenorhabditis elegans.